A 358-amino-acid chain; its full sequence is Capsid protein VP1/VP2 (358 aa).

Residues 1–15 (MADSTSMDHDGEQRG) show a composition bias toward basic and acidic residues. Residues 1–37 (MADSTSMDHDGEQRGTKRKRDAGAGGSGAGIGKGTSN) form a disordered region. Gly residues predominate over residues 23–33 (GAGGSGAGIGK).

It is found in the virion. In terms of biological role, capsid protein self-assembles to form an icosahedral capsid with a T=1 symmetry, about 22 nm in diameter, and consisting of 60 copies of size variants of the capsid proteins, which differ in the N-terminushe capsid encapsulates the genomic ssDNA. Capsid proteins are responsible for the attachment to host cell receptors. This attachment induces virion internalization predominantly through clathrin-dependent endocytosis. This is Capsid protein VP1/VP2 (VP) from Aedes (Aedes densovirus).